The sequence spans 387 residues: GDSL esterase/lipase At2g23540 (387 aa).

Positions 1–32 (MATRASTSSRVSPAFTFLVIFFLLSLTASVEA) are cleaved as a signal peptide. Residue Ser55 is the Nucleophile of the active site. 2 N-linked (GlcNAc...) asparagine glycosylation sites follow: Asn139 and Asn159. Residues Asp352 and His355 contribute to the active site. Asn380 is a glycosylation site (N-linked (GlcNAc...) asparagine).

Belongs to the 'GDSL' lipolytic enzyme family.

The protein resides in the secreted. The polypeptide is GDSL esterase/lipase At2g23540 (Arabidopsis thaliana (Mouse-ear cress)).